A 589-amino-acid polypeptide reads, in one-letter code: Putative ABC transporter ATP-binding protein MG015 (589 aa).

The next 6 membrane-spanning stretches (helical) occupy residues 9 to 29, 66 to 86, 161 to 181, 251 to 271, 280 to 300, and 303 to 323; these read LLYVFLCIVLGILYGIANPIL, LTIVSVTVFVAYALIFVFNVA, LIFLLSPVIALISLSILATLI, IFLFSWFGFISNITYLVSISI, IPSFGISVINYSFMLSYIASL, and ITLALDQIFTLWNLVQLGVVS. In terms of domain architecture, ABC transmembrane type-1 spans 9 to 319; the sequence is LLYVFLCIVL…IFTLWNLVQL (311 aa). The 235-residue stretch at 352–586 folds into the ABC transporter domain; that stretch reads IRFENVAFGY…NGFYARLKQS (235 aa). 385–392 provides a ligand contact to ATP; that stretch reads GPTGAGKS.

The protein belongs to the ABC transporter superfamily.

It localises to the cell membrane. This is Putative ABC transporter ATP-binding protein MG015 from Mycoplasma genitalium (strain ATCC 33530 / DSM 19775 / NCTC 10195 / G37) (Mycoplasmoides genitalium).